Reading from the N-terminus, the 519-residue chain is MKQKNQHKKKKKRSCAAKPSGDGTTSDGNKKDVEEERKDGEGKREIENVGKNFIESLMEAFCSVSMEEAMAAYKEAGGDLNKAAEILSDLVESGDDPSTSSVASGSSGQETASTSEYGAGSSSSCSEDLTRDRWFKGSKQSRVIAATGMVSSVIAKDYLKPNPVRKEFPMMERSKELCGNGKKAADREKAEQFLSSMLGDDCELSMAVVRDVLCQCGYDVDMALNVLLDMSSSSTDDSLSGKCFGIGVSDSLAESSFDTDTSDCELFWGGDYSQRDYAKALMSSQDPFATTQGIDELGLPQKVLESLFNIRQNPKHESKTTSWRNVAKKMQSLGIDASSSSGEEPHPNTFVKDDSYHELRKGANDQWNVTKSYYQKAAEAYSKGGRAHAAYLSDKGRVASKQAQRADERASQDIFVARNKGIENVVTIDLHGQHVKPAMKLLKLHLLFGSYVPSIQTLRVITGCGASGFGKSKVKQSVVKLLEREGVRYCEENRGTLLIKLDGGSREFSFLDTESDSDE.

Basic residues predominate over residues 1 to 15 (MKQKNQHKKKKKRSC). Disordered regions lie at residues 1-47 (MKQK…REIE) and 92-128 (ESGD…CSED). Residues 28–47 (GNKKDVEEERKDGEGKREIE) show a composition bias toward basic and acidic residues. Residues 98–127 (STSSVASGSSGQETASTSEYGAGSSSSCSE) are compositionally biased toward low complexity. The 75-residue stretch at 428–502 (IDLHGQHVKP…NRGTLLIKLD (75 aa)) folds into the Smr domain.

Interacts with PRL1.

This is SMR domain-containing protein At5g58720 from Arabidopsis thaliana (Mouse-ear cress).